The primary structure comprises 180 residues: RNA polymerase sigma-E factor (180 aa).

Positions aspartate 36–tryptophan 49 match the Polymerase core binding motif. The segment at residues threonine 130 to histidine 149 is a DNA-binding region (H-T-H motif).

This sequence belongs to the sigma-70 factor family. ECF subfamily.

The protein localises to the cytoplasm. Functionally, sigma factors are initiation factors that promote the attachment of RNA polymerase to specific initiation sites and are then released. This sigma factor is required for the synthesis of the antibiotic actinomycin. This is RNA polymerase sigma-E factor (sigE) from Streptomyces antibioticus.